Reading from the N-terminus, the 342-residue chain is Strictosidine synthase (342 aa).

A signal peptide spans 1–20 (KLSDSQTMALFTVFLLFLSS). N89 carries an N-linked (GlcNAc...) asparagine glycan.

The protein belongs to the strictosidine synthase family. Monomer.

Its subcellular location is the vacuole. It carries out the reaction 3alpha(S)-strictosidine + H2O = secologanin + tryptamine. Its pathway is alkaloid biosynthesis; 3alpha(S)-strictosidine biosynthesis; 3alpha(S)-strictosidine from secologanin and tryptamine: step 1/1. In terms of biological role, catalyzes the stereospecific condensation of tryptamine with secologanin to form strictosidine, the key intermediate of indole alkaloid biosynthesis. This is Strictosidine synthase (STR1) from Rauvolfia mannii.